The sequence spans 1377 residues: DNA-directed RNA polymerase subunit beta' (1377 aa).

The Zn(2+) site is built by Cys-70, Cys-72, Cys-85, and Cys-88. 3 residues coordinate Mg(2+): Asp-460, Asp-462, and Asp-464. Cys-808, Cys-882, Cys-889, and Cys-892 together coordinate Zn(2+).

It belongs to the RNA polymerase beta' chain family. The RNAP catalytic core consists of 2 alpha, 1 beta, 1 beta' and 1 omega subunit. When a sigma factor is associated with the core the holoenzyme is formed, which can initiate transcription. It depends on Mg(2+) as a cofactor. The cofactor is Zn(2+).

It carries out the reaction RNA(n) + a ribonucleoside 5'-triphosphate = RNA(n+1) + diphosphate. Its function is as follows. DNA-dependent RNA polymerase catalyzes the transcription of DNA into RNA using the four ribonucleoside triphosphates as substrates. In Geotalea daltonii (strain DSM 22248 / JCM 15807 / FRC-32) (Geobacter daltonii), this protein is DNA-directed RNA polymerase subunit beta'.